Here is a 313-residue protein sequence, read N- to C-terminus: MLNLIYNEWLKIFSRAGTWVMIGILGLTMVGFAFLANHFSAGESNSHWKQELQAQNAELKKEIKEDPSLKDGYKETITLNDYRIEHNIPSDTGYTVWSYVTDSANFTILTGLFTIIIAAGIVANEFNWGTIKLLMIRPLSRFQILMSKYITVLLFGLLLLLILFIGSTLLGLIFFGTGGETAANIHLIYKDGHVIEQNMMGHLATTYLSESVSALMVATMAFMLSAVFRNSSLAVGFSIFLLVAGTTATAFIAAKFDWAKYILFANVDLTQYVDGTPLIKGMTMTFSLVMLAIYFIIFLLLAFGIFMKRDIAN.

Helical transmembrane passes span 16–36 (AGTWVMIGILGLTMVGFAFLA), 106–126 (FTILTGLFTIIIAAGIVANEF), 155–175 (FGLLLLLILFIGSTLLGLIFF), 208–228 (LSESVSALMVATMAFMLSAVF), 233–253 (LAVGFSIFLLVAGTTATAFIA), and 286–306 (FSLVMLAIYFIIFLLLAFGIF).

The protein localises to the cell membrane. This is an uncharacterized protein from Bacillus subtilis (strain 168).